Here is a 230-residue protein sequence, read N- to C-terminus: MAGKENNFPPLPPFLPLKPCFYQDFSDEIPVEHQVLVKRIYRLWMFYCATLGVNLVACLAWWIAGGAGANFGLALLWLVLFTPCSYVCWFRPAYKAFRADSSFNFMTFFFIFGAQFVLTVIQAIGFSGWGACGWLAAVGFFGTSVGAAVVMLVPAILFSLSALVMAVTIVKVHRIYRGAGGSLQKAQTEWSAGTWRNPPSREAQFNSFSGNSLPEYPTVPSYSSSGGHWP.

Residues 1 to 39 (MAGKENNFPPLPPFLPLKPCFYQDFSDEIPVEHQVLVKR) are Cytoplasmic-facing. 4 helical membrane passes run 40 to 60 (IYRL…ACLA), 61 to 81 (WWIA…LVLF), 106 to 126 (MTFF…AIGF), and 149 to 169 (VVML…AVTI). Residues 170–230 (VKVHRIYRGA…SYSSSGGHWP (61 aa)) lie on the Cytoplasmic side of the membrane. Thr194 bears the Phosphothreonine mark.

Belongs to the SCAMP family.

It is found in the membrane. In terms of biological role, probably involved in membrane protein trafficking. The protein is Secretory carrier-associated membrane protein 4 (Scamp4) of Mus musculus (Mouse).